A 315-amino-acid polypeptide reads, in one-letter code: Cysteine proteinase 2 (315 aa).

The signal sequence occupies residues 1-13 (MFAFICLLAIASA). A propeptide spans 14 to 93 (IDFNTWASKN…NGQVKYLNIQ (80 aa)) (activation peptide). Intrachain disulfides connect cysteine 115–cysteine 161 and cysteine 152–cysteine 193. Cysteine 118 is a catalytic residue. Residues histidine 259 and asparagine 279 contribute to the active site.

Belongs to the peptidase C1 family. Interacts with cysteine protease inhibitor ICP1. Interacts with cysteine protease inhibitor ICP2.

It is found in the cell membrane. The protein localises to the cytoplasmic vesicle. Its subcellular location is the phagosome. The protein resides in the secreted. It catalyses the reaction Hydrolysis of proteins, including basement membrane collagen and azocasein. Preferential cleavage: Arg-Arg-|-Xaa in small molecule substrates including Z-Arg-Arg-|-NHMec.. Inhibited by cysteine protease inhibitors ICP1 and ICP2. Inhibited by leupeptin and such inhibitors of cysteine proteinases as L-transepoxysuccinyl-L-leucylamido-(4-guanidino)butane, peptidyldiazomethanes, iodoacetic acid and chicken cystatin. In terms of biological role, cysteine protease which degrades matrix proteins such as collagen, laminin and fibronectin and thus is involved in the destruction of human tissue. Can abolish adhesion. May play an important role in pathogenicity. In Entamoeba histolytica (strain ATCC 30459 / HM-1:IMSS / ABRM), this protein is Cysteine proteinase 2.